A 282-amino-acid polypeptide reads, in one-letter code: Pantothenate synthetase (282 aa).

26–33 (MGNLHEGH) is a binding site for ATP. The Proton donor role is filled by His33. Gln57 provides a ligand contact to (R)-pantoate. A beta-alanine-binding site is contributed by Gln57. 144-147 (GKKD) is a binding site for ATP. Position 150 (Gln150) interacts with (R)-pantoate. ATP contacts are provided by residues Ile173 and 181-184 (LSSR).

This sequence belongs to the pantothenate synthetase family. Homodimer.

The protein resides in the cytoplasm. The enzyme catalyses (R)-pantoate + beta-alanine + ATP = (R)-pantothenate + AMP + diphosphate + H(+). Its pathway is cofactor biosynthesis; (R)-pantothenate biosynthesis; (R)-pantothenate from (R)-pantoate and beta-alanine: step 1/1. Functionally, catalyzes the condensation of pantoate with beta-alanine in an ATP-dependent reaction via a pantoyl-adenylate intermediate. This is Pantothenate synthetase from Cupriavidus necator (strain ATCC 17699 / DSM 428 / KCTC 22496 / NCIMB 10442 / H16 / Stanier 337) (Ralstonia eutropha).